Reading from the N-terminus, the 116-residue chain is Endocuticle structural glycoprotein SgAbd-4 (116 aa).

Gln1 bears the Pyrrolidone carboxylic acid mark. In terms of domain architecture, Chitin-binding type R&amp;R spans 20–92 (DGSYQWNYET…PQGAHFPTPP (73 aa)). 2 O-linked (HexNAc...) threonine glycosylation sites follow: Thr90 and Thr107. O-linked (HexNAc...) serine glycosylation occurs at Ser110. Thr111 is a glycosylation site (O-linked (HexNAc...) threonine). At Pro116 the chain carries Proline amide.

Functionally, component of the abdominal endocuticle. The chain is Endocuticle structural glycoprotein SgAbd-4 from Schistocerca gregaria (Desert locust).